Reading from the N-terminus, the 550-residue chain is Small ribosomal subunit protein uS3m (550 aa).

The segment at 112–133 (NDDTEEERNEVGGRGAGKRVES) is disordered.

Belongs to the universal ribosomal protein uS3 family.

The protein resides in the mitochondrion. The sequence is that of Small ribosomal subunit protein uS3m (RPS3) from Oenothera berteroana (Bertero's evening primrose).